Here is a 166-residue protein sequence, read N- to C-terminus: NADH-quinone oxidoreductase subunit E (166 aa).

Cysteine 92, cysteine 97, cysteine 133, and cysteine 137 together coordinate [2Fe-2S] cluster.

This sequence belongs to the complex I 24 kDa subunit family. As to quaternary structure, composed of 13 different subunits. Subunits NuoCD, E, F, and G constitute the peripheral sector of the complex. [2Fe-2S] cluster is required as a cofactor.

The catalysed reaction is a quinone + NADH + 5 H(+)(in) = a quinol + NAD(+) + 4 H(+)(out). NDH-1 shuttles electrons from NADH, via FMN and iron-sulfur (Fe-S) centers, to quinones in the respiratory chain. The immediate electron acceptor for the enzyme in this species is believed to be ubiquinone. Couples the redox reaction to proton translocation (for every two electrons transferred, four hydrogen ions are translocated across the cytoplasmic membrane), and thus conserves the redox energy in a proton gradient. In Pseudomonas aeruginosa (strain ATCC 15692 / DSM 22644 / CIP 104116 / JCM 14847 / LMG 12228 / 1C / PRS 101 / PAO1), this protein is NADH-quinone oxidoreductase subunit E (nuoE).